The following is a 554-amino-acid chain: Pigment biosynthesis transcriptional activator pigB (554 aa).

The tract at residues 1–21 (MFTSSSPEQRKPRQSRQLPGA) is disordered. Positions 23–40 (CEECRRKKLRCDRQQPQC) form a DNA-binding region, zn(2)-C6 fungal-type.

The protein resides in the nucleus. Functionally, transcription factor; part of the gene cluster that mediates the biosynthesis of azaphilone pigments (MonAzPs), a complex mixture of compounds with a common azaphilone skeleton very widely used as food colorants. Positively regulates the expression of the azaphilone pigments (MonAzPs) gene cluster. The protein is Pigment biosynthesis transcriptional activator pigB of Monascus ruber (Mold).